The following is a 324-amino-acid chain: NADH-ubiquinone oxidoreductase chain 1 (324 aa).

The next 8 helical transmembrane spans lie at 10–30 (MIMT…LTLV), 76–96 (FLFI…WIPL), 107–127 (LGLL…LWSG), 143–163 (VAQT…TIML), 178–198 (PIYL…STLA), 229–249 (LFFL…ITLF), 260–280 (ELFS…FLWV), and 300–320 (FLPL…SYAG).

It belongs to the complex I subunit 1 family.

It is found in the mitochondrion inner membrane. The enzyme catalyses a ubiquinone + NADH + 5 H(+)(in) = a ubiquinol + NAD(+) + 4 H(+)(out). Its function is as follows. Core subunit of the mitochondrial membrane respiratory chain NADH dehydrogenase (Complex I) that is believed to belong to the minimal assembly required for catalysis. Complex I functions in the transfer of electrons from NADH to the respiratory chain. The immediate electron acceptor for the enzyme is believed to be ubiquinone. In Excalfactoria chinensis (Blue-breasted quail), this protein is NADH-ubiquinone oxidoreductase chain 1 (MT-ND1).